Reading from the N-terminus, the 206-residue chain is Large ribosomal subunit protein uL4 (206 aa).

This sequence belongs to the universal ribosomal protein uL4 family. Part of the 50S ribosomal subunit.

In terms of biological role, one of the primary rRNA binding proteins, this protein initially binds near the 5'-end of the 23S rRNA. It is important during the early stages of 50S assembly. It makes multiple contacts with different domains of the 23S rRNA in the assembled 50S subunit and ribosome. Functionally, forms part of the polypeptide exit tunnel. The protein is Large ribosomal subunit protein uL4 of Rhodopseudomonas palustris (strain ATCC BAA-98 / CGA009).